The following is a 317-amino-acid chain: Forkhead box protein B2 (317 aa).

A DNA-binding region (fork-head) is located at residues 13 to 107; that stretch reads KPPYSYISLT…ENGSFLRRRK (95 aa).

As to expression, first expressed within the dorsolateral ectoderm, except for the organizer territory. During gastrulation, expressed in 2 ectodermal stripes adjacent to the dorsal midline. With the onset of neurulation, expression shifts first to the neural plate before settling on the bottom of the neural tube, on top of the notochord. Expression is then absent until stage 35, at which stage a pair of cells in the fourth rhombomere in the dorsolateral outer area of the rhombencephalon show expression. This is followed shortly afterwards by expression in a pair of cells in rhombomere 6 at the ventricular side of the rhombencephalon.

It localises to the nucleus. Its function is as follows. Transcription factor. In Xenopus laevis (African clawed frog), this protein is Forkhead box protein B2.